Reading from the N-terminus, the 118-residue chain is Ribonuclease P protein component (118 aa).

It belongs to the RnpA family. As to quaternary structure, consists of a catalytic RNA component (M1 or rnpB) and a protein subunit.

The catalysed reaction is Endonucleolytic cleavage of RNA, removing 5'-extranucleotides from tRNA precursor.. In terms of biological role, RNaseP catalyzes the removal of the 5'-leader sequence from pre-tRNA to produce the mature 5'-terminus. It can also cleave other RNA substrates such as 4.5S RNA. The protein component plays an auxiliary but essential role in vivo by binding to the 5'-leader sequence and broadening the substrate specificity of the ribozyme. This is Ribonuclease P protein component from Desulfatibacillum aliphaticivorans.